Reading from the N-terminus, the 472-residue chain is Divalent metal cation transporter MntH (472 aa).

A run of 11 helical transmembrane segments spans residues 59-79, 92-112, 144-164, 167-187, 196-216, 233-253, 288-308, 325-345, 377-397, 402-422, and 439-459; these read LLAFLGPGYMVSVGYMDPGNW, MLLSVILLSNVMAIVLQALAA, LAIIACDLAEVIGTAIALNLL, VPIILGAVITAVDVVLVLLLM, AFVIALLLVIFGCFVVQIVLA, VVADPQALYLAIGIVGATVMP, LALMLALFINASILILAAAVF, LLAPVLGVGVAATLFATALLA, VLTRGLAIVPVIVVVALYGEQ, LLLLSQVILSMQLPFAVIPLL, and WLMVVAWLIAGVIVVLNVKLL.

Belongs to the NRAMP family.

Its subcellular location is the cell inner membrane. In terms of biological role, h(+)-stimulated, divalent metal cation uptake system. This chain is Divalent metal cation transporter MntH, found in Xylella fastidiosa (strain Temecula1 / ATCC 700964).